The sequence spans 449 residues: Asparagine--tRNA ligase (449 aa).

This sequence belongs to the class-II aminoacyl-tRNA synthetase family. In terms of assembly, homodimer.

It is found in the cytoplasm. It catalyses the reaction tRNA(Asn) + L-asparagine + ATP = L-asparaginyl-tRNA(Asn) + AMP + diphosphate + H(+). This is Asparagine--tRNA ligase from Mesomycoplasma hyopneumoniae (strain 7448) (Mycoplasma hyopneumoniae).